A 65-amino-acid polypeptide reads, in one-letter code: Putative beta-neurotoxin RjAa2 (65 aa).

Residues 1–64 (KEGYPMGRDG…VWDSSTNKCG (64 aa)) form the LCN-type CS-alpha/beta domain. Disulfide bonds link C11–C63, C15–C37, C22–C44, and C26–C46.

This sequence belongs to the long (4 C-C) scorpion toxin superfamily. Sodium channel inhibitor family. Beta subfamily. In terms of tissue distribution, expressed by the venom gland.

It is found in the secreted. Its function is as follows. Beta toxins bind voltage-independently at site-4 of sodium channels (Nav) and shift the voltage of activation toward more negative potentials thereby affecting sodium channel activation and promoting spontaneous and repetitive firing. This is Putative beta-neurotoxin RjAa2 from Rhopalurus junceus (Caribbean blue scorpion).